Consider the following 345-residue polypeptide: C5a anaphylatoxin chemotactic receptor 1 (345 aa).

Residues 1–32 lie on the Extracellular side of the membrane; it reads MMVTVSYDYDYNSTFLPDGFVDNYVERLSFGD. Residues Y9 and Y11 each carry the sulfotyrosine modification. N12 carries N-linked (GlcNAc...) asparagine glycosylation. A helical transmembrane segment spans residues 33-59; the sequence is LVAVVIMVVVFLVGVPGNALVVWVTAC. Topologically, residues 60–64 are cytoplasmic; sequence EARRH. Residues 65–88 form a helical membrane-spanning segment; it reads INAIWFLNLAAADLLSCLALPILL. Over 89-105 the chain is Extracellular; it reads VSTVHLNHWYFGDTACK. An intrachain disulfide couples C104 to C183. Residues 106 to 127 traverse the membrane as a helical segment; the sequence is VLPSLILLNMYTSILLLATISA. The Cytoplasmic segment spans residues 128–148; the sequence is DRLLLVLSPIWCQRFRGGCLA. Residues 149 to 169 traverse the membrane as a helical segment; the sequence is WTACGLAWVLALLLSSPSFLY. Topologically, residues 170–195 are extracellular; that stretch reads RRTHNEHFSFKVYCVTDYGRDISKER. Residues 196 to 221 traverse the membrane as a helical segment; that stretch reads AVALVRLLVGFIVPLITLTACYTFLL. The Cytoplasmic segment spans residues 222-237; that stretch reads LRTWSRKATRSAKTVK. A helical membrane pass occupies residues 238 to 260; sequence VVVAVVSSFFVFWLPYQVTGILL. Topologically, residues 261–277 are extracellular; the sequence is AWHSPNSATYRNTKALD. A helical membrane pass occupies residues 278–298; it reads AVCVAFAYINCCINPIIYVVA. At 299-345 the chain is on the cytoplasmic side; that stretch reads GHGFQGRLLKSLPSVLRNVLTEESLDKRHQSFARSTVDTMPQKSESV. Phosphoserine is present on residues S309, S312, S322, S329, and S333.

The protein belongs to the G-protein coupled receptor 1 family. Homodimer. May also form higher-order oligomers. Interacts (when phosphorylated) with ARRB1 and ARRB2; the interaction is associated with internalization of C5aR. In terms of processing, sulfation plays a critical role in the association of C5aR with C5a, but no significant role in the ability of the receptor to transduce a signal and mobilize calcium in response to a small peptide agonist. Phosphorylated on serine residues in response to C5a binding, resulting in internalization of the receptor and short-term desensitization to C5a. In terms of tissue distribution, expressed strongly in macrophages and spleen. Weak expression detected in lung, liver, brain, heart and kidney.

It is found in the cell membrane. Its subcellular location is the cytoplasmic vesicle. Receptor for the chemotactic and inflammatory peptide anaphylatoxin C5a. The ligand interacts with at least two sites on the receptor: a high-affinity site on the extracellular N-terminus, and a second site in the transmembrane region which activates downstream signaling events. Receptor activation stimulates chemotaxis, granule enzyme release, intracellular calcium release and superoxide anion production. The chain is C5a anaphylatoxin chemotactic receptor 1 (C5AR1) from Cavia porcellus (Guinea pig).